A 91-amino-acid polypeptide reads, in one-letter code: Long neurotoxin OH-37 (91 aa).

Positions 1 to 21 (MKTLLLTLVVMTIVCLDLGYS) are cleaved as a signal peptide. 5 cysteine pairs are disulfide-bonded: Cys-24-Cys-41, Cys-34-Cys-62, Cys-47-Cys-51, Cys-66-Cys-77, and Cys-78-Cys-83.

This sequence belongs to the three-finger toxin family. Long-chain subfamily. Type II alpha-neurotoxin sub-subfamily. As to expression, expressed by the venom gland.

Its subcellular location is the secreted. Functionally, binds with high affinity to muscular (alpha-1/CHRNA1) and neuronal (alpha-7/CHRNA7) nicotinic acetylcholine receptor (nAChR) and inhibits acetylcholine from binding to the receptor, thereby impairing neuromuscular and neuronal transmission. The protein is Long neurotoxin OH-37 of Ophiophagus hannah (King cobra).